The sequence spans 467 residues: MDTILAGGSGTSDASDNTCTICMSTVSDLGKTMPCLHDFCFVCIRAWTSTSVQCPLCRCPVQSILHKIVSDTSYKEYEVHPSDDDGFSEPSFEDSIDILPGDVIDLLPPSPGPSRESIQQPTSRSSREPIQSPNPGPLQSSAREPTAESPSDSQQDSIQPPTRDSSPGVTKTCSTASFLRKVFFKDQPAVRSATPVVYGSIESAQQPRTGGQDYRDRPVSVGINQDPRTMDRLPFRATDRGTEGNARFPCYMQPLLGWLDDQLAELYQPEIVEPTKMLILNYIGIYGRDEAGLKTSLRCLLHDSTGPFVTNMLFLLDRCTDPTRLTMQTWTWKDTAIQLITGPIVRPETTSTGETSRGDERDTRLVNTPQKVRLFSVLPGIKPGSARGAKRRLFHTGRDVKRCLTIDLTSESDSACKGSKTRKVASPQGESNTPSTSGSTSGSLKHLTKKSSAGKAGKGIPNKMKKS.

An RING-type zinc finger spans residues 19–58; sequence CTICMSTVSDLGKTMPCLHDFCFVCIRAWTSTSVQCPLCR. Disordered regions lie at residues 101-171, 205-238, 344-364, and 413-467; these read GDVI…GVTK, QQPR…FRAT, IVRP…RDTR, and DSAC…MKKS. Residues 116-143 show a composition bias toward polar residues; sequence ESIQQPTSRSSREPIQSPNPGPLQSSAR. Over residues 149-161 the composition is skewed to low complexity; that stretch reads SPSDSQQDSIQPP. Positions 162–171 are enriched in polar residues; it reads TRDSSPGVTK. Residues 228-238 are compositionally biased toward basic and acidic residues; the sequence is RTMDRLPFRAT. Low complexity-rich tracts occupy residues 429 to 443 and 450 to 459; these read GESN…TSGS and KSSAGKAGKG.

As to quaternary structure, interacts with host BTRC; this interaction seems to inactivate SCF-mediated protein degradation in general. Auto-ubiquitinated.

It carries out the reaction S-ubiquitinyl-[E2 ubiquitin-conjugating enzyme]-L-cysteine + [acceptor protein]-L-lysine = [E2 ubiquitin-conjugating enzyme]-L-cysteine + N(6)-ubiquitinyl-[acceptor protein]-L-lysine.. In terms of biological role, RING-finger E3 ubiquitin ligase that degrades host SP100, one of the major components of ND10 nuclear bodies, thereby disrupting the organization of these bodies. Also plays a role in the inhibition of host NF-kappa-B pathway by blocking the SCF(BTRC)-mediated addition of ubiquitin chains to host I-kappa-B-alpha/NFKBIA, thereby interfering with its degradation. This is E3 ubiquitin-protein ligase IE61 (61) from Varicella-zoster virus (strain Dumas) (HHV-3).